Reading from the N-terminus, the 513-residue chain is uncharacterized protein (513 aa).

5 consecutive transmembrane segments (helical) span residues 262-282 (FAIFTDNTPFVLTGPITFWQL), 304-324 (YMFLFVALYLPAIYVAVITYH), 341-361 (EPIPFPAIIEALIMEISFEAL), 382-402 (LVIGTAAVEAGIVSAPMVIIV), and 429-449 (MFLASIFGIFGIMLGTIILVL). Residues 489 to 513 (PGTYSRGNGQKGAKREDPKDEENNI) form a disordered region. Positions 501–513 (AKREDPKDEENNI) are enriched in basic and acidic residues.

It belongs to the GerABKA family.

It is found in the cell membrane. This is an uncharacterized protein from Bacillus subtilis (strain 168).